The chain runs to 166 residues: Regulatory protein RecX (166 aa).

Belongs to the RecX family.

It localises to the cytoplasm. Its function is as follows. Modulates RecA activity. In Salmonella paratyphi A (strain ATCC 9150 / SARB42), this protein is Regulatory protein RecX.